The following is a 203-amino-acid chain: MNEFTLNAEQRSDLGKGASRRLRRLASLVPAVVYGGDKAPESISMLAKEVAKLLENDAAYSHIIELNVGGQKQNVIIKALQRHPAKGHVMHADFVRVIAGQKLTAIVPIHFLNEEAPVKKGGEISHTTTELEVTCLPKDLPEFIEVDLGALEVGDNVHLSELKAPKGVEFVALAHGTDLAIANVHAPRIVKDEAEEGEEGAAE.

This sequence belongs to the bacterial ribosomal protein bL25 family. CTC subfamily. In terms of assembly, part of the 50S ribosomal subunit; part of the 5S rRNA/L5/L18/L25 subcomplex. Contacts the 5S rRNA. Binds to the 5S rRNA independently of L5 and L18.

In terms of biological role, this is one of the proteins that binds to the 5S RNA in the ribosome where it forms part of the central protuberance. This Pseudomonas savastanoi pv. phaseolicola (strain 1448A / Race 6) (Pseudomonas syringae pv. phaseolicola (strain 1448A / Race 6)) protein is Large ribosomal subunit protein bL25.